The sequence spans 798 residues: Protocadherin beta-13 (798 aa).

Residues 1–28 (MEASGKLICRQRQVLFSFLLLGLSLAGA) form the signal peptide. The Extracellular segment spans residues 29–690 (AEPRSYSVVE…AQADLLTVYL (662 aa)). Cadherin domains lie at 36–134 (VVEE…SPVF), 139–243 (MLVK…APEF), 248–348 (YRVQ…APEV), 353–451 (FTSP…APAF), and 456–561 (YTLF…SPFV). Residues Asn418 and Asn436 are each glycosylated (N-linked (GlcNAc...) asparagine). Residue Asn567 is glycosylated (N-linked (GlcNAc...) asparagine). The 104-residue stretch at 568 to 671 (GSAPCTELVP…LVDGFSQPYL (104 aa)) folds into the Cadherin 6 domain. The helical transmembrane segment at 691–711 (VVALASVSSLFLFSVLLFVAV) threads the bilayer. Residues 712 to 798 (RLCRRSRAAS…FPNNFGFNIQ (87 aa)) lie on the Cytoplasmic side of the membrane.

It localises to the cell membrane. Its function is as follows. Potential calcium-dependent cell-adhesion protein. May be involved in the establishment and maintenance of specific neuronal connections in the brain. The sequence is that of Protocadherin beta-13 (PCDHB13) from Homo sapiens (Human).